Reading from the N-terminus, the 207-residue chain is MPKVTVYNQTGSQVGEIELAEAIFGIEPNEAVLFEAVMMQRASLRQGTHKVKTRSEVRGGGRKPWRQKGTGRARQGSIRSPQWRGGGTVFGPTPRSYAYKLPKKVRRLAIKSALATKVVENNIVVLEDLVLNAPKTKDMVAVLKGLTVEKKALIVTADANESVELSARNIPGVTVITADGVNVLDVLHHDKLIMTKAAVEKVEEVLA.

The tract at residues 45–89 is disordered; it reads RQGTHKVKTRSEVRGGGRKPWRQKGTGRARQGSIRSPQWRGGGTV. Over residues 60–71 the composition is skewed to basic residues; sequence GGRKPWRQKGTG.

It belongs to the universal ribosomal protein uL4 family. Part of the 50S ribosomal subunit.

One of the primary rRNA binding proteins, this protein initially binds near the 5'-end of the 23S rRNA. It is important during the early stages of 50S assembly. It makes multiple contacts with different domains of the 23S rRNA in the assembled 50S subunit and ribosome. In terms of biological role, forms part of the polypeptide exit tunnel. The sequence is that of Large ribosomal subunit protein uL4 from Bacillus mycoides (strain KBAB4) (Bacillus weihenstephanensis).